The primary structure comprises 443 residues: tRNA modification GTPase MnmE (443 aa).

(6S)-5-formyl-5,6,7,8-tetrahydrofolate is bound by residues Arg23, Glu80, and Lys120. The region spanning 217-367 (GFEVVILGAP…LLAEIGRRAA (151 aa)) is the TrmE-type G domain. Residues 227–232 (NAGKSS), 246–252 (TDEPGTT), and 271–274 (DTAG) each bind GTP. Mg(2+) contacts are provided by Ser231 and Thr252. Position 443 (Lys443) interacts with (6S)-5-formyl-5,6,7,8-tetrahydrofolate.

This sequence belongs to the TRAFAC class TrmE-Era-EngA-EngB-Septin-like GTPase superfamily. TrmE GTPase family. Homodimer. Heterotetramer of two MnmE and two MnmG subunits. K(+) is required as a cofactor.

It localises to the cytoplasm. Exhibits a very high intrinsic GTPase hydrolysis rate. Involved in the addition of a carboxymethylaminomethyl (cmnm) group at the wobble position (U34) of certain tRNAs, forming tRNA-cmnm(5)s(2)U34. The protein is tRNA modification GTPase MnmE of Mesorhizobium japonicum (strain LMG 29417 / CECT 9101 / MAFF 303099) (Mesorhizobium loti (strain MAFF 303099)).